The sequence spans 229 residues: 3-dehydroquinate dehydratase (229 aa).

Residues 33-35 (EWR) and R65 contribute to the 3-dehydroquinate site. H121 (proton donor/acceptor) is an active-site residue. K146 acts as the Schiff-base intermediate with substrate in catalysis. 3-dehydroquinate contacts are provided by R188, S207, and Q211.

It belongs to the type-I 3-dehydroquinase family. In terms of assembly, homodimer.

The catalysed reaction is 3-dehydroquinate = 3-dehydroshikimate + H2O. It functions in the pathway metabolic intermediate biosynthesis; chorismate biosynthesis; chorismate from D-erythrose 4-phosphate and phosphoenolpyruvate: step 3/7. Involved in the third step of the chorismate pathway, which leads to the biosynthesis of aromatic amino acids. Catalyzes the cis-dehydration of 3-dehydroquinate (DHQ) and introduces the first double bond of the aromatic ring to yield 3-dehydroshikimate. This is 3-dehydroquinate dehydratase from Lactococcus lactis subsp. cremoris (strain MG1363).